We begin with the raw amino-acid sequence, 398 residues long: Pentalenolactone synthase (398 aa).

Residue Cys-347 coordinates heme.

This sequence belongs to the cytochrome P450 family. Heme serves as cofactor.

The catalysed reaction is pentalenolactone F + 2 reduced [2Fe-2S]-[ferredoxin] + O2 + 2 H(+) = pentalenolactone + 2 oxidized [2Fe-2S]-[ferredoxin] + 2 H2O. The protein operates within antibiotic biosynthesis; pentalenolactone biosynthesis. Its function is as follows. Catalyzes the final step in the biosynthesis of the sesquiterpenoid antibiotic pentalenolactone by mediating the oxidative rearrangement of pentalenolactone F to pentalenolactone. The protein is Pentalenolactone synthase (penM) of Streptomyces exfoliatus (Streptomyces hydrogenans).